The primary structure comprises 204 residues: Arginine exporter protein ArgO (204 aa).

The next 6 helical transmembrane spans lie at 1–21 (MFAV…PLGP), 37–57 (LMVA…GIFG), 67–87 (LLLG…GWGA), 111–131 (IIAT…DTFV), 147–167 (WFAL…ALLA), and 179–199 (VQRV…LQLA).

The protein belongs to the LysE/ArgO transporter (TC 2.A.75) family.

The protein localises to the cell inner membrane. It catalyses the reaction L-arginine(in) = L-arginine(out). Its function is as follows. Involved in the export of arginine. Important to control the intracellular level of arginine and the correct balance between arginine and lysine. In Pectobacterium carotovorum subsp. carotovorum (strain PC1), this protein is Arginine exporter protein ArgO.